A 578-amino-acid chain; its full sequence is Oxygen sensor histidine kinase response regulator DevS/DosS (578 aa).

GAF domains are found at residues aspartate 63 to valine 200 and glutamate 231 to tryptophan 369. Residue histidine 149 coordinates heme. The Histidine kinase domain maps to valine 383–glutamine 578. Position 395 is a phosphohistidine; by autocatalysis (histidine 395).

Mg(2+) serves as cofactor. Heme is required as a cofactor.

It localises to the cytoplasm. The enzyme catalyses ATP + protein L-histidine = ADP + protein N-phospho-L-histidine.. In terms of biological role, member of the two-component regulatory system DevR/DevS (DosR/DosS) involved in onset of the dormancy response. Regulates an approximately 48-member regulon. Required for full induction of the DevR (DosR) regulon; acts later than DosT to positively regulate expression of the DevR regulon during adaptation to anaerobiosis. Characterized as an oxygen sensor; O(2) acts as a switch, with O(2)-bound Fe(2+) protein inactive in autophosphorylation. Has also been suggested to act as a redox sensor, or perhaps as a dual oxygen/redox sensor. Donates a phosphate group to transcriptional regulator DevR (DosR). This Mycobacterium tuberculosis (strain CDC 1551 / Oshkosh) protein is Oxygen sensor histidine kinase response regulator DevS/DosS (devS).